Reading from the N-terminus, the 108-residue chain is X antigen family member 5 (108 aa).

Residues Val-20–Leu-108 are disordered. Composition is skewed to basic and acidic residues over residues Ser-40–Asp-52 and Glu-94–Leu-108.

The protein belongs to the GAGE family.

In Homo sapiens (Human), this protein is X antigen family member 5 (XAGE5).